The chain runs to 84 residues: Large ribosomal subunit protein bL27 (84 aa).

The interval Met-1 to Ala-27 is disordered.

It belongs to the bacterial ribosomal protein bL27 family.

The chain is Large ribosomal subunit protein bL27 from Chlamydia pneumoniae (Chlamydophila pneumoniae).